The primary structure comprises 40 residues: Protamine-1 (40 aa).

A disordered region spans residues 1–40 (MPPRRKRVSSAPRRRRRTYRRTTAHKHQDRPVHRRRRRRH).

Testis.

It is found in the nucleus. It localises to the chromosome. Its function is as follows. Protamines substitute for histones in the chromatin of sperm during the haploid phase of spermatogenesis. They compact sperm DNA into a highly condensed, stable and inactive complex. This chain is Protamine-1 (PBP1), found in Bufo japonicus (Japanese common toad).